The following is a 181-amino-acid chain: Crossover junction endodeoxyribonuclease RuvC (181 aa).

Active-site residues include aspartate 7, glutamate 67, and aspartate 139. Mg(2+) contacts are provided by aspartate 7, glutamate 67, and aspartate 139.

This sequence belongs to the RuvC family. Homodimer which binds Holliday junction (HJ) DNA. The HJ becomes 2-fold symmetrical on binding to RuvC with unstacked arms; it has a different conformation from HJ DNA in complex with RuvA. In the full resolvosome a probable DNA-RuvA(4)-RuvB(12)-RuvC(2) complex forms which resolves the HJ. Mg(2+) serves as cofactor.

The protein resides in the cytoplasm. It carries out the reaction Endonucleolytic cleavage at a junction such as a reciprocal single-stranded crossover between two homologous DNA duplexes (Holliday junction).. The RuvA-RuvB-RuvC complex processes Holliday junction (HJ) DNA during genetic recombination and DNA repair. Endonuclease that resolves HJ intermediates. Cleaves cruciform DNA by making single-stranded nicks across the HJ at symmetrical positions within the homologous arms, yielding a 5'-phosphate and a 3'-hydroxyl group; requires a central core of homology in the junction. The consensus cleavage sequence is 5'-(A/T)TT(C/G)-3'. Cleavage occurs on the 3'-side of the TT dinucleotide at the point of strand exchange. HJ branch migration catalyzed by RuvA-RuvB allows RuvC to scan DNA until it finds its consensus sequence, where it cleaves and resolves the cruciform DNA. The sequence is that of Crossover junction endodeoxyribonuclease RuvC from Cupriavidus pinatubonensis (strain JMP 134 / LMG 1197) (Cupriavidus necator (strain JMP 134)).